A 232-amino-acid chain; its full sequence is Proteasome subunit alpha type-2 (232 aa).

This sequence belongs to the peptidase T1A family. As to quaternary structure, the 26S proteasome consists of a 20S proteasome core and two 19S regulatory subunits. The 20S proteasome core is composed of 28 subunits that are arranged in four stacked rings, resulting in a barrel-shaped structure. The two end rings are each formed by seven alpha subunits, and the two central rings are each formed by seven beta subunits. The catalytic chamber with the active sites is on the inside of the barrel.

The protein localises to the cytoplasm. It localises to the nucleus. Its function is as follows. The proteasome is a multicatalytic proteinase complex which is characterized by its ability to cleave peptides with Arg, Phe, Tyr, Leu, and Glu adjacent to the leaving group at neutral or slightly basic pH. The proteasome has an ATP-dependent proteolytic activity. This is Proteasome subunit alpha type-2 (psmA2) from Dictyostelium discoideum (Social amoeba).